The following is a 328-amino-acid chain: uncharacterized protein (328 aa).

The signal sequence occupies residues 1–24 (MKSIKGLGKLLLASSILFSSSAFA).

This sequence belongs to the bacterial solute-binding protein 7 family.

It localises to the periplasm. This is an uncharacterized protein from Haemophilus influenzae (strain ATCC 51907 / DSM 11121 / KW20 / Rd).